A 239-amino-acid chain; its full sequence is uncharacterized protein (239 aa).

The dksA C4-type; degenerate zinc-finger motif lies at 94–114 (CEVSGKEIPFERLEALPTATT). A compositionally biased stretch (acidic residues) spans 133 to 158 (ETPFGQFEFDDDEEIRAPYDSEDSYQ). The disordered stretch occupies residues 133-182 (ETPFGQFEFDDDEEIRAPYDSEDSYQDVEKYGNSQTPQDMENPPLSYDDM).

This is an uncharacterized protein from Bacillus subtilis (strain 168).